We begin with the raw amino-acid sequence, 335 residues long: Mitochondrial amidoxime reducing component 2 (335 aa).

The transit peptide at 1–35 (MGASSSSALARLGLPARPWPRWLGVAALGLAAVAL) directs the protein to the mitochondrion. Glycyl lysine isopeptide (Lys-Gly) (interchain with G-Cter in ubiquitin) cross-links involve residues K59, K138, and K144. The residue at position 156 (K156) is an N6-acetyllysine; alternate. Residue K156 forms a Glycyl lysine isopeptide (Lys-Gly) (interchain with G-Cter in ubiquitin); alternate linkage. Glycyl lysine isopeptide (Lys-Gly) (interchain with G-Cter in ubiquitin) cross-links involve residues K166, K173, K187, K287, and K294. One can recognise an MOSC domain in the interval 188–334 (GRTSRKLLPT…LRVGDPVYRM (147 aa)).

In terms of assembly, component of a complex composed of cytochrome b5, NADH-cytochrome b5 reductase (CYB5R3) and MTARC2. It depends on Mo-molybdopterin as a cofactor. Post-translationally, ubiquitinated by PRKN during mitophagy, leading to its degradation and enhancement of mitophagy. Deubiquitinated by USP30.

Its subcellular location is the mitochondrion outer membrane. The protein resides in the peroxisome. The enzyme catalyses N(omega)-hydroxy-L-arginine + 2 Fe(II)-[cytochrome b5] + 2 H(+) = L-arginine + 2 Fe(III)-[cytochrome b5] + H2O. Its function is as follows. Catalyzes the reduction of N-oxygenated molecules, acting as a counterpart of cytochrome P450 and flavin-containing monooxygenases in metabolic cycles. As a component of prodrug-converting system, reduces a multitude of N-hydroxylated prodrugs particularly amidoximes, leading to increased drug bioavailability. May be involved in mitochondrial N(omega)-hydroxy-L-arginine (NOHA) reduction, regulating endogenous nitric oxide levels and biosynthesis. Postulated to cleave the N-OH bond of N-hydroxylated substrates in concert with electron transfer from NADH to cytochrome b5 reductase then to cytochrome b5, the ultimate electron donor that primes the active site for substrate reduction. This is Mitochondrial amidoxime reducing component 2 from Homo sapiens (Human).